We begin with the raw amino-acid sequence, 510 residues long: GTPase Der (510 aa).

2 EngA-type G domains span residues 4-168 (PVVA…AEKM) and 222-395 (IKIA…ACAT). Residues 10–17 (GRPNVGKS), 57–61 (DTGGI), 120–123 (NKTD), 228–235 (GRPNVGKS), 275–279 (DTAGV), and 340–343 (NKWD) each bind GTP. The KH-like domain maps to 396 to 480 (QKMTTSMLTR…PIRLLFQEGN (85 aa)).

Belongs to the TRAFAC class TrmE-Era-EngA-EngB-Septin-like GTPase superfamily. EngA (Der) GTPase family. Associates with the 50S ribosomal subunit.

GTPase that plays an essential role in the late steps of ribosome biogenesis. This Pasteurella multocida (strain Pm70) protein is GTPase Der.